A 64-amino-acid chain; its full sequence is Large ribosomal subunit protein uL29 (64 aa).

The protein belongs to the universal ribosomal protein uL29 family.

This is Large ribosomal subunit protein uL29 from Dichelobacter nodosus (strain VCS1703A).